The primary structure comprises 249 residues: MKKYQFEVCANSVESCLAAQAGGADRVELCAGIPEGGTTPSYGEISTARDMLTTTRLHVIIRPRGGDFLYSPIEVRTMLKDIEMARQLGADGVVFGCLTANGEIDLPVMQELMKASQGLSVTFHRAFDICRDPEKALEQIIELGCNRILTSGQQATAELGIPLLKALQTQASGRIILLAGCGVNEKNIARIASETGIQEFHFSARESIKSDMKYKNESVSMGGTVHIDEYERNVTTAQRVINTIQAIKS.

It belongs to the CutC family.

The protein resides in the cytoplasm. The sequence is that of PF03932 family protein CutC from Bacteroides thetaiotaomicron (strain ATCC 29148 / DSM 2079 / JCM 5827 / CCUG 10774 / NCTC 10582 / VPI-5482 / E50).